The sequence spans 66 residues: Large ribosomal subunit protein bL35 (66 aa).

Belongs to the bacterial ribosomal protein bL35 family.

The protein is Large ribosomal subunit protein bL35 of Neorickettsia sennetsu (strain ATCC VR-367 / Miyayama) (Ehrlichia sennetsu).